A 162-amino-acid chain; its full sequence is Probable chorismate pyruvate-lyase (162 aa).

Substrate is bound by residues Arg-54, Leu-92, and Glu-149.

The protein belongs to the UbiC family.

The protein resides in the cytoplasm. The enzyme catalyses chorismate = 4-hydroxybenzoate + pyruvate. The protein operates within cofactor biosynthesis; ubiquinone biosynthesis. Removes the pyruvyl group from chorismate, with concomitant aromatization of the ring, to provide 4-hydroxybenzoate (4HB) for the ubiquinone pathway. The chain is Probable chorismate pyruvate-lyase from Methylococcus capsulatus (strain ATCC 33009 / NCIMB 11132 / Bath).